A 1551-amino-acid polypeptide reads, in one-letter code: UDP-glucose:glycoprotein glucosyltransferase 1 (1551 aa).

The signal sequence occupies residues 1–42 (MCSRGDANTADAAAARRVTGLRYNMRLLIALALPCLFSLAEA). 3 N-linked (GlcNAc...) asparagine glycosylation sites follow: Asn-269, Asn-536, and Asn-1228. Residues 1244-1551 (KAEEVKQDKD…QEGSQKHEEL (308 aa)) form a glucosyltransferase region. Ser-1277 carries the phosphoserine modification. The segment at 1531–1551 (KELGTLHTEETQEGSQKHEEL) is disordered. The short motif at 1548-1551 (HEEL) is the Prevents secretion from ER element.

The protein belongs to the glycosyltransferase 8 family. As to quaternary structure, monomer as well as in a tight complex with SELENOF. Interacts with METTL23. Part of a large chaperone multiprotein complex comprising DNAJB11, HSP90B1, HSPA5, HYOU, PDIA2, PDIA4, PDIA6, PPIB, SDF2L1, UGGT1 and very small amounts of ERP29, but not, or at very low levels, CALR nor CANX. It depends on Ca(2+) as a cofactor. Mn(2+) is required as a cofactor.

It is found in the endoplasmic reticulum lumen. It localises to the endoplasmic reticulum-Golgi intermediate compartment. The enzyme catalyses N(4)-(alpha-D-Man-(1-&gt;2)-alpha-D-Man-(1-&gt;2)-alpha-D-Man-(1-&gt;3)-[alpha-D-Man-(1-&gt;2)-alpha-D-Man-(1-&gt;3)-[alpha-D-Man-(1-&gt;2)-alpha-D-Man-(1-&gt;6)]-alpha-D-Man-(1-&gt;6)]-beta-D-Man-(1-&gt;4)-beta-D-GlcNAc-(1-&gt;4)-beta-D-GlcNAc)-L-asparaginyl-[protein] (N-glucan mannose isomer 9A1,2,3B1,2,3) + UDP-alpha-D-glucose = N(4)-(alpha-D-Glc-(1-&gt;3)-alpha-D-Man-(1-&gt;2)-alpha-D-Man-(1-&gt;2)-alpha-D-Man-(1-&gt;3)-[alpha-D-Man-(1-&gt;2)-alpha-D-Man-(1-&gt;3)-[alpha-D-Man-(1-&gt;2)-alpha-D-Man-(1-&gt;6)]-alpha-D-Man-(1-&gt;6)]-beta-D-Man-(1-&gt;4)-beta-D-GlcNAc-(1-&gt;4)-beta-D-GlcNAc)-L-asparaginyl-[protein] + UDP + H(+). Its pathway is protein modification; protein glycosylation. Its function is as follows. Recognizes glycoproteins with minor folding defects. Reglucosylates single N-glycans near the misfolded part of the protein, thus providing quality control for protein folding in the endoplasmic reticulum. Reglucosylated proteins are recognized by calreticulin for recycling to the endoplasmic reticulum and refolding or degradation. The sequence is that of UDP-glucose:glycoprotein glucosyltransferase 1 (Uggt1) from Mus musculus (Mouse).